Consider the following 125-residue polypeptide: Cyclic diguanosine monophosphate-binding protein PA4608 (125 aa).

Residue 6–13 participates in 3',3'-c-di-GMP binding; sequence DERRRFHR. Residues 7-103 enclose the PilZ domain; sequence ERRRFHRIAF…SISHLRRLVE (97 aa). An RXXXR motif; surrounds the surface of the c-di-GMP binding site motif is present at residues 9–13; it reads RRFHR. A DXSXXG motif; surrounds the surface of the c-di-GMP binding site motif is present at residues 35-40; it reads DVSLHG. Trp-77 lines the 3',3'-c-di-GMP pocket.

Monomer in both c-di-GMP-bound and free forms.

Its function is as follows. Binds the second messenger bis-(3'-5') cyclic dimeric guanosine monophosphate (c-di-GMP). Can bind two c-di-GMP molecules per monomer. May play a role in bacterial second-messenger regulated processes. Binding to c-di-GMP induces a conformational change of the C- and N-termini resulting in the exposure of a highly negative surface on one side of the protein to a possible effector protein. The sequence is that of Cyclic diguanosine monophosphate-binding protein PA4608 from Pseudomonas aeruginosa (strain ATCC 15692 / DSM 22644 / CIP 104116 / JCM 14847 / LMG 12228 / 1C / PRS 101 / PAO1).